Here is a 428-residue protein sequence, read N- to C-terminus: Histidine--tRNA ligase (428 aa).

Belongs to the class-II aminoacyl-tRNA synthetase family. Homodimer.

The protein resides in the cytoplasm. It carries out the reaction tRNA(His) + L-histidine + ATP = L-histidyl-tRNA(His) + AMP + diphosphate + H(+). This is Histidine--tRNA ligase from Pseudomonas entomophila (strain L48).